Reading from the N-terminus, the 342-residue chain is tRNA dimethylallyltransferase (342 aa).

Positions 1 to 30 (MSANGPAAEPADGGRAVPAGGGEAVPAGGG) are disordered. Residues 19-30 (AGGGEAVPAGGG) are compositionally biased toward gly residues. Position 49 to 56 (49 to 56 (GPTAAGKS)) interacts with ATP. 51 to 56 (TAAGKS) lines the substrate pocket. The segment at 74-77 (DSMQ) is interaction with substrate tRNA.

It belongs to the IPP transferase family. In terms of assembly, monomer. Mg(2+) serves as cofactor.

The catalysed reaction is adenosine(37) in tRNA + dimethylallyl diphosphate = N(6)-dimethylallyladenosine(37) in tRNA + diphosphate. Catalyzes the transfer of a dimethylallyl group onto the adenine at position 37 in tRNAs that read codons beginning with uridine, leading to the formation of N6-(dimethylallyl)adenosine (i(6)A). This chain is tRNA dimethylallyltransferase, found in Salinispora arenicola (strain CNS-205).